The following is a 222-amino-acid chain: Small ribosomal subunit protein uS3 (222 aa).

One can recognise a KH type-2 domain in the interval 39 to 107; sequence IRKYIKTKFY…QININIAEIK (69 aa).

It belongs to the universal ribosomal protein uS3 family. Part of the 30S ribosomal subunit. Forms a tight complex with proteins S10 and S14.

Binds the lower part of the 30S subunit head. Binds mRNA in the 70S ribosome, positioning it for translation. The chain is Small ribosomal subunit protein uS3 from Carboxydothermus hydrogenoformans (strain ATCC BAA-161 / DSM 6008 / Z-2901).